Here is a 196-residue protein sequence, read N- to C-terminus: Pyridoxal 5'-phosphate synthase subunit PdxT (196 aa).

46–48 (GES) is an L-glutamine binding site. Cys78 functions as the Nucleophile in the catalytic mechanism. Residues Arg105 and 133-134 (IR) contribute to the L-glutamine site. Active-site charge relay system residues include His169 and Glu171.

This sequence belongs to the glutaminase PdxT/SNO family. In terms of assembly, in the presence of PdxS, forms a dodecamer of heterodimers. Only shows activity in the heterodimer.

The enzyme catalyses aldehydo-D-ribose 5-phosphate + D-glyceraldehyde 3-phosphate + L-glutamine = pyridoxal 5'-phosphate + L-glutamate + phosphate + 3 H2O + H(+). It catalyses the reaction L-glutamine + H2O = L-glutamate + NH4(+). Its pathway is cofactor biosynthesis; pyridoxal 5'-phosphate biosynthesis. Its function is as follows. Catalyzes the hydrolysis of glutamine to glutamate and ammonia as part of the biosynthesis of pyridoxal 5'-phosphate. The resulting ammonia molecule is channeled to the active site of PdxS. The polypeptide is Pyridoxal 5'-phosphate synthase subunit PdxT (Geobacillus kaustophilus (strain HTA426)).